The primary structure comprises 193 residues: Ion-translocating oxidoreductase complex subunit A (193 aa).

The next 6 membrane-spanning stretches (helical) occupy residues 5 to 25, 39 to 59, 62 to 82, 102 to 122, 134 to 154, and 171 to 191; these read ALLFVSILLVNNFVLVKFLGL, IGMGMATTFVMTVGSMFSWLV, FILVPLDILYLRTMAFILVLA, LLGIFLPLITTNCAVLGVVLL, TIYGFGGAAGFSLVMVLFAAI, and SIALITAGLMSLAFMGFTGLV.

It belongs to the NqrDE/RnfAE family. In terms of assembly, the complex is composed of six subunits: RnfA, RnfB, RnfC, RnfD, RnfE and RnfG.

It localises to the cell inner membrane. Part of a membrane-bound complex that couples electron transfer with translocation of ions across the membrane. In Pectobacterium carotovorum subsp. carotovorum (strain PC1), this protein is Ion-translocating oxidoreductase complex subunit A.